A 555-amino-acid chain; its full sequence is Phosphoglucomutase (555 aa).

Substrate is bound by residues Thr-45, Arg-49, 148–149, and Lys-158; that span reads SH. The active-site Phosphoserine intermediate is the Ser-148. Ser-148 is a Mg(2+) binding site. The Mg(2+) site is built by Asp-306, Asp-308, and Asp-310. Residues 310–311 and 393–395 each bind substrate; these read DR and EES.

The protein belongs to the phosphohexose mutase family. The cofactor is Mg(2+).

It carries out the reaction alpha-D-glucose 1-phosphate = alpha-D-glucose 6-phosphate. This enzyme participates in both the breakdown and synthesis of glucose. In Komagataeibacter xylinus (Gluconacetobacter xylinus), this protein is Phosphoglucomutase (celB).